The chain runs to 227 residues: Uracil-DNA glycosylase (227 aa).

Aspartate 64 serves as the catalytic Proton acceptor.

It belongs to the uracil-DNA glycosylase (UDG) superfamily. UNG family.

It localises to the cytoplasm. It carries out the reaction Hydrolyzes single-stranded DNA or mismatched double-stranded DNA and polynucleotides, releasing free uracil.. Functionally, excises uracil residues from the DNA which can arise as a result of misincorporation of dUMP residues by DNA polymerase or due to deamination of cytosine. The chain is Uracil-DNA glycosylase from Sodalis glossinidius (strain morsitans).